We begin with the raw amino-acid sequence, 200 residues long: Formate dehydrogenase iron-sulfur subunit (200 aa).

3 consecutive 4Fe-4S ferredoxin-type domains span residues 7 to 37, 50 to 81, and 82 to 111; these read VKFYCDEARCIDCHGCDVACKEAHHLPVGVN, GKEKSLSIACMHCSDAPCAQVCPVDCFYVRAD, and GIVLHDKEKCIGCGYCLYACPFGAPQFPKS. Residues Cys-16, Cys-19, Cys-22, Cys-26, Cys-59, Cys-62, Cys-67, Cys-71, Cys-91, Cys-94, Cys-97, Cys-101, Cys-123, Cys-126, Cys-155, and Cys-159 each contribute to the [4Fe-4S] cluster site.

Formate dehydrogenase is a membrane-bound complex, formed of at least three different subunits. The cofactor is [4Fe-4S] cluster.

Its function is as follows. This chain is an electron transfer unit containing 18 cysteine residues, 16 of which occur in four clusters. The chain is Formate dehydrogenase iron-sulfur subunit (fdhB1) from Wolinella succinogenes (strain ATCC 29543 / DSM 1740 / CCUG 13145 / JCM 31913 / LMG 7466 / NCTC 11488 / FDC 602W) (Vibrio succinogenes).